Consider the following 1068-residue polypeptide: Huntingtin-interacting protein 1-related protein (1068 aa).

Methionine 1 is subject to N-acetylmethionine. An ENTH domain is found at 23 to 151; that stretch reads EREQFDKTQA…SFHLKHPQFP (129 aa). Residues 346–644 adopt a coiled-coil conformation; it reads GSMKDDRDLQ…LQDAVSKLDD (299 aa). The interval 582–610 is disordered; it reads EALSQEQQRSSQEKGELRGQLAEKESQEQ. The span at 592 to 608 shows a compositional bias: basic and acidic residues; it reads SQEKGELRGQLAEKESQ. In terms of domain architecture, I/LWEQ spans 771–1012; the sequence is SLDVRQEELG…ELRKQHYVLA (242 aa). Residues 867–924 form an important for actin binding region; the sequence is RWTEGLISASKAVGWGATQLVESADKVVLHMGKYEELIVCSHEIAASTAQLVAASKVK. The interval 1011–1068 is disordered; the sequence is LAGGMGTPSEEEPSRPSPAPRSGATKKPPLAQKPSIAPRTDNQLDKKDGVYPAQLVNY.

It belongs to the SLA2 family. As to quaternary structure, homodimer. Interacts with actin; homodimerization promotes actin binding. Interacts with CLTB. Interacts with HIP1. Interacts (via ENTH and I/LWEQ domains) with BCL2L10. In terms of tissue distribution, widely expressed. Expressed at lower levels in skeletal muscle and heart. The level of expression does not change appreciably during development.

It is found in the cytoplasm. The protein localises to the perinuclear region. It localises to the endomembrane system. Its subcellular location is the cytoplasmic vesicle. The protein resides in the clathrin-coated vesicle membrane. Its function is as follows. Component of clathrin-coated pits and vesicles, that may link the endocytic machinery to the actin cytoskeleton. Binds 3-phosphoinositides (via ENTH domain). May act through the ENTH domain to promote cell survival by stabilizing receptor tyrosine kinases following ligand-induced endocytosis. This Mus musculus (Mouse) protein is Huntingtin-interacting protein 1-related protein (Hip1r).